The chain runs to 238 residues: tRNA (guanine-N(7)-)-methyltransferase (238 aa).

Positions 1–12 are enriched in polar residues; that stretch reads MTDTAENQTPND. The interval 1–20 is disordered; it reads MTDTAENQTPNDRQAGHPRS. 4 residues coordinate S-adenosyl-L-methionine: E70, D95, D122, and D145. Residue D145 is part of the active site. Substrate is bound by residues K149, D181, and 216–219; that span reads TKFE.

The protein belongs to the class I-like SAM-binding methyltransferase superfamily. TrmB family.

The enzyme catalyses guanosine(46) in tRNA + S-adenosyl-L-methionine = N(7)-methylguanosine(46) in tRNA + S-adenosyl-L-homocysteine. It participates in tRNA modification; N(7)-methylguanine-tRNA biosynthesis. In terms of biological role, catalyzes the formation of N(7)-methylguanine at position 46 (m7G46) in tRNA. This chain is tRNA (guanine-N(7)-)-methyltransferase, found in Neisseria gonorrhoeae (strain NCCP11945).